Here is a 120-residue protein sequence, read N- to C-terminus: NAD(P)H-quinone oxidoreductase subunit 3, chloroplastic (120 aa).

The next 3 helical transmembrane spans lie at 9–29 (IFWA…LISG), 64–84 (MFAL…PWAM), and 88–108 (VLGL…IVGS).

The protein belongs to the complex I subunit 3 family. In terms of assembly, NDH is composed of at least 16 different subunits, 5 of which are encoded in the nucleus.

It is found in the plastid. The protein localises to the chloroplast thylakoid membrane. It carries out the reaction a plastoquinone + NADH + (n+1) H(+)(in) = a plastoquinol + NAD(+) + n H(+)(out). The catalysed reaction is a plastoquinone + NADPH + (n+1) H(+)(in) = a plastoquinol + NADP(+) + n H(+)(out). Functionally, NDH shuttles electrons from NAD(P)H:plastoquinone, via FMN and iron-sulfur (Fe-S) centers, to quinones in the photosynthetic chain and possibly in a chloroplast respiratory chain. The immediate electron acceptor for the enzyme in this species is believed to be plastoquinone. Couples the redox reaction to proton translocation, and thus conserves the redox energy in a proton gradient. The sequence is that of NAD(P)H-quinone oxidoreductase subunit 3, chloroplastic from Manihot esculenta (Cassava).